The sequence spans 165 residues: MNEIVQLFLLIWPPYVANGSAVLAARLRRRHPLDFGKNFLDGRRIFGDGKTFEGVAIGVSAGTLLGYAPNLAYSYLTLLDAFLLATAAIVGDLLGAFVKRRLCMPRGYPAFPLDQLDFLLMALLVYSLYRELHIPLLLAAVVLTPVIHRATNYAAYKLRLKKEPW.

Transmembrane regions (helical) follow at residues 4 to 24 (IVQL…AVLA), 78 to 98 (LLDA…GAFV), and 118 to 138 (FLLM…PLLL).

It belongs to the CDP-archaeol synthase family. Mg(2+) is required as a cofactor.

Its subcellular location is the cell membrane. The enzyme catalyses 2,3-bis-O-(geranylgeranyl)-sn-glycerol 1-phosphate + CTP + H(+) = CDP-2,3-bis-O-(geranylgeranyl)-sn-glycerol + diphosphate. It participates in membrane lipid metabolism; glycerophospholipid metabolism. Catalyzes the formation of CDP-2,3-bis-(O-geranylgeranyl)-sn-glycerol (CDP-archaeol) from 2,3-bis-(O-geranylgeranyl)-sn-glycerol 1-phosphate (DGGGP) and CTP. This reaction is the third ether-bond-formation step in the biosynthesis of archaeal membrane lipids. The protein is CDP-archaeol synthase of Pyrobaculum calidifontis (strain DSM 21063 / JCM 11548 / VA1).